The primary structure comprises 104 residues: MTEWNGEYISPYAEHGKKNEQVKKITVSIPLKVLKVLTDERTRRQVNNLRHATNSELLCEAFLHAYTGQPLPDDADLSKECPDSIPAEAKRLMDEMGIEWEDME.

This sequence belongs to the MetJ family. As to quaternary structure, homodimer.

It is found in the cytoplasm. Its function is as follows. This regulatory protein, when combined with SAM (S-adenosylmethionine) represses the expression of the methionine regulon and of enzymes involved in SAM synthesis. The sequence is that of Met repressor from Shewanella oneidensis (strain ATCC 700550 / JCM 31522 / CIP 106686 / LMG 19005 / NCIMB 14063 / MR-1).